The sequence spans 358 residues: Peptide chain release factor 1 (358 aa).

Q235 is modified (N5-methylglutamine).

The protein belongs to the prokaryotic/mitochondrial release factor family. Methylated by PrmC. Methylation increases the termination efficiency of RF1.

The protein localises to the cytoplasm. In terms of biological role, peptide chain release factor 1 directs the termination of translation in response to the peptide chain termination codons UAG and UAA. In Neisseria gonorrhoeae (strain NCCP11945), this protein is Peptide chain release factor 1.